The following is a 179-amino-acid chain: Lebocin-3 (179 aa).

Residues 1–16 form the signal peptide; sequence MYKFLVFSSVLVLFFA. The propeptide occupies 17-120; it reads QASCQRFIQP…QPIESHRNTR (104 aa). T135 carries an O-linked (GalNAc...) threonine glycan. Positions 153–179 are excised as a propeptide; the sequence is RRHASEDQEELRQYNEHFLIPRDIFQE.

It belongs to the lebocin family. O-glycosylation is important for the antibacterial activity of lebocin. In terms of tissue distribution, hemolymph. Produced in fat body.

The protein resides in the secreted. Its function is as follows. Antibacterial peptide. This Bombyx mori (Silk moth) protein is Lebocin-3 (LEB3).